Here is a 176-residue protein sequence, read N- to C-terminus: NAD(P)H-quinone oxidoreductase subunit 6, chloroplastic (176 aa).

Helical transmembrane passes span 10–30 (FILVFLGSGLILGSLGVVFFT), 32–52 (TIFSAFSLGLVLVCVSLFYIL), 63–83 (LLIYVGAINVLIIFAVMFMNG), 92–112 (VWTVGDGITLMVCTSIFISQI), and 152–172 (FFLPFELISIILLVALIGAIF).

It belongs to the complex I subunit 6 family. As to quaternary structure, NDH is composed of at least 16 different subunits, 5 of which are encoded in the nucleus.

The protein localises to the plastid. It is found in the chloroplast thylakoid membrane. The enzyme catalyses a plastoquinone + NADH + (n+1) H(+)(in) = a plastoquinol + NAD(+) + n H(+)(out). It catalyses the reaction a plastoquinone + NADPH + (n+1) H(+)(in) = a plastoquinol + NADP(+) + n H(+)(out). NDH shuttles electrons from NAD(P)H:plastoquinone, via FMN and iron-sulfur (Fe-S) centers, to quinones in the photosynthetic chain and possibly in a chloroplast respiratory chain. The immediate electron acceptor for the enzyme in this species is believed to be plastoquinone. Couples the redox reaction to proton translocation, and thus conserves the redox energy in a proton gradient. This is NAD(P)H-quinone oxidoreductase subunit 6, chloroplastic (ndhG) from Phaseolus vulgaris (Kidney bean).